A 141-amino-acid chain; its full sequence is Aspartate 1-decarboxylase (141 aa).

Catalysis depends on Ser25, which acts as the Schiff-base intermediate with substrate; via pyruvic acid. Residue Ser25 is modified to Pyruvic acid (Ser). Thr57 is a substrate binding site. Catalysis depends on Tyr58, which acts as the Proton donor. Gly73 to Ala75 is a substrate binding site.

This sequence belongs to the PanD family. As to quaternary structure, heterooctamer of four alpha and four beta subunits. Pyruvate serves as cofactor. In terms of processing, is synthesized initially as an inactive proenzyme, which is activated by self-cleavage at a specific serine bond to produce a beta-subunit with a hydroxyl group at its C-terminus and an alpha-subunit with a pyruvoyl group at its N-terminus.

Its subcellular location is the cytoplasm. It catalyses the reaction L-aspartate + H(+) = beta-alanine + CO2. Its pathway is cofactor biosynthesis; (R)-pantothenate biosynthesis; beta-alanine from L-aspartate: step 1/1. Its function is as follows. Catalyzes the pyruvoyl-dependent decarboxylation of aspartate to produce beta-alanine. In Pseudarthrobacter chlorophenolicus (strain ATCC 700700 / DSM 12829 / CIP 107037 / JCM 12360 / KCTC 9906 / NCIMB 13794 / A6) (Arthrobacter chlorophenolicus), this protein is Aspartate 1-decarboxylase.